We begin with the raw amino-acid sequence, 191 residues long: Large ribosomal subunit protein bL9 (191 aa).

Positions 150 to 191 are disordered; sequence EAERQAKGESLTSADAIYGVDEDALRPEDFFDPDADRDGDDE. Positions 179–191 are enriched in acidic residues; it reads FFDPDADRDGDDE.

Belongs to the bacterial ribosomal protein bL9 family.

Functionally, binds to the 23S rRNA. The chain is Large ribosomal subunit protein bL9 from Allorhizobium ampelinum (strain ATCC BAA-846 / DSM 112012 / S4) (Agrobacterium vitis (strain S4)).